The following is a 1180-amino-acid chain: IQ domain-containing protein N (1180 aa).

Residues 34–78 (HPPAPAHPSLLDKMEKAPPQPQHEGLKSKEHLPQQPAEGKTASRR) form a disordered region. The 30-residue stretch at 103–132 (HARAATLIQANWRGYWLRQKLISQMMAAKA) folds into the IQ 1 domain. Disordered stretches follow at residues 283-324 (RVSA…ETPK), 476-496 (MSKTSSQRSPVGVTKPSPQTR), and 786-820 (QRLGGLSAPPWAKPEDRQTQPQPHGHVPGKTTQGG). 5 IQ domains span residues 926 to 955 (RILAVITIQAGVRGYLARRRIRLWHRGAMV), 956 to 978 (IQATWRGYRVRRNLAHLCRATTT), 979 to 1001 (IQSAWRGYSTRRDQARHWQMLHP), 1113 to 1142 (QDKAATAIQSAWRGFKIRQQMRQQQMAAKI), and 1143 to 1165 (VQATWRGHHTRSCLKNTEALLGP).

As to quaternary structure, interacts with calmodulin.

In terms of biological role, essential for spermiogenesis and fertilization. May be required for manchette assembly in elongating spermatids. The chain is IQ domain-containing protein N from Homo sapiens (Human).